Reading from the N-terminus, the 227-residue chain is 7-cyano-7-deazaguanine synthase (227 aa).

8 to 18 (LSGGLDSATVL) contacts ATP. Zn(2+) contacts are provided by C191, C201, C204, and C207.

The protein belongs to the QueC family. Zn(2+) serves as cofactor.

The enzyme catalyses 7-carboxy-7-deazaguanine + NH4(+) + ATP = 7-cyano-7-deazaguanine + ADP + phosphate + H2O + H(+). It participates in purine metabolism; 7-cyano-7-deazaguanine biosynthesis. Functionally, catalyzes the ATP-dependent conversion of 7-carboxy-7-deazaguanine (CDG) to 7-cyano-7-deazaguanine (preQ(0)). This Paramagnetospirillum magneticum (strain ATCC 700264 / AMB-1) (Magnetospirillum magneticum) protein is 7-cyano-7-deazaguanine synthase.